The chain runs to 704 residues: Transmembrane protein DDB_G0274347 (704 aa).

Residues 37-145 (VEQRDEVNDE…NNYNNNNTPT (109 aa)) form a disordered region. Acidic residues predominate over residues 43–67 (VNDEFQEEEEELEDDDDDEDDEDEI). A compositionally biased stretch (basic and acidic residues) spans 85 to 99 (HNDKEKEKKKDKQEE). The span at 100–113 (YIDSDDDDDDDGDE) shows a compositional bias: acidic residues. Over residues 114 to 142 (NYYLNNNNNNNNNINNNNNYNNNNYNNNN) the composition is skewed to low complexity. The N-linked (GlcNAc...) asparagine glycan is linked to asparagine 166. The chain crosses the membrane as a helical span at residues 255–275 (ALISMALLISLVAIIFYLPLP). Asparagine 354 carries N-linked (GlcNAc...) asparagine glycosylation. 3 helical membrane-spanning segments follow: residues 370–390 (LKIF…WLFA), 414–434 (TLLV…LYFI), and 513–533 (LVSF…FLIS). A compositionally biased stretch (low complexity) spans 550–565 (TTTTTINTTTNTTSNT). The disordered stretch occupies residues 550 to 576 (TTTTTINTTTNTTSNTSQQSNPLSKRL). N-linked (GlcNAc...) asparagine glycosylation is found at asparagine 556, asparagine 560, and asparagine 564. Residues 566–576 (SQQSNPLSKRL) show a composition bias toward polar residues. Helical transmembrane passes span 609–629 (FIIV…GVPP) and 638–658 (IFFI…LIII).

It is found in the membrane. The protein is Transmembrane protein DDB_G0274347 of Dictyostelium discoideum (Social amoeba).